A 345-amino-acid polypeptide reads, in one-letter code: MNINDILKKLINKSDLEIDEAEELAKAIIRGEVPEILVSAILVALRMKGESKNEIVGFARAMRELAIKIDVPNAIDTAGTGGDGLGTVNVSTASAILLSLINPVAKHGNRAVSGKSGSADVLEALGYNIIVPPERAKELVHKTNFVFLFAQYYHPAMKNVANVRKTLGIRTIFNILGPLTNPANAKYQLMGVFSKDHLDLLSKSAYELDFNKVILVHGEPGIDEVSPIGKTFMKIVSKRGIEEVKFDVTDFGISSIPIDKLIVNSAEDSAIKIVRAFLGKDEHVAEFIKINTAVALFALDKVSDFKEGYEYAKYLIENSVNKLNEIISLNGDLTKLKTIMVKSSG.

5-phospho-alpha-D-ribose 1-diphosphate is bound by residues Gly-79, 82 to 83, Thr-87, 89 to 92, 106 to 114, and Ser-118; these read GD, NVST, and KHGNRAVSG. Residue Gly-79 participates in anthranilate binding. Residue Ser-91 coordinates Mg(2+). Asn-109 provides a ligand contact to anthranilate. Arg-164 is a binding site for anthranilate. Mg(2+) is bound by residues Asp-223 and Glu-224.

It belongs to the anthranilate phosphoribosyltransferase family. As to quaternary structure, homodimer. Mg(2+) is required as a cofactor.

It catalyses the reaction N-(5-phospho-beta-D-ribosyl)anthranilate + diphosphate = 5-phospho-alpha-D-ribose 1-diphosphate + anthranilate. The protein operates within amino-acid biosynthesis; L-tryptophan biosynthesis; L-tryptophan from chorismate: step 2/5. Its function is as follows. Catalyzes the transfer of the phosphoribosyl group of 5-phosphorylribose-1-pyrophosphate (PRPP) to anthranilate to yield N-(5'-phosphoribosyl)-anthranilate (PRA). The sequence is that of Anthranilate phosphoribosyltransferase from Saccharolobus islandicus (strain M.14.25 / Kamchatka #1) (Sulfolobus islandicus).